We begin with the raw amino-acid sequence, 350 residues long: MVDGTLLLLLSEALALTQTWAGSHSLKYFHTSVSRPGRGEPRFISVGYVDDTQFVRFDNDAASPRMVPRAPWMEQEGSEYWDRETRSARDTAQIFRVNLRTLRGYYNQSEAGSHTLQWMHGCDLGPDGRFLRGYEQFAYDGKDYLTLNEDLRSWTAVDTAAQISERKSNDACEAEHQRAYLEDTCVEWLHKYLEKGKETLLHLEPPKTHVTHHPISDHEATLRCWALGFYPAEITLTWQQDGEGHTQDTELVDTRPAGDGTFQKWAAVVVPSGEEQRYTCHVQHEGLPEPLTLRWKPASQPTIPIVGIIAGLVLLGSVVSGAVVAAVMWRKKSSGGKGRSYSKAEWSDSA.

Positions 1–21 (MVDGTLLLLLSEALALTQTWA) are cleaved as a signal peptide. Positions 22-111 (GSHSLKYFHT…LRGYYNQSEA (90 aa)) are alpha-1. At 22–305 (GSHSLKYFHT…KPASQPTIPI (284 aa)) the chain is on the extracellular side. An N-linked (GlcNAc...) asparagine glycan is attached at Asn107. An alpha-2 region spans residues 112 to 203 (GSHTLQWMHG…EKGKETLLHL (92 aa)). Disulfide bonds link Cys122–Cys185 and Cys224–Cys280. The segment at 204-295 (EPPKTHVTHH…GLPEPLTLRW (92 aa)) is alpha-3. In terms of domain architecture, Ig-like C1-type spans 206 to 294 (PKTHVTHHPI…EGLPEPLTLR (89 aa)). Residues 296–305 (KPASQPTIPI) are connecting peptide. Residues 306–329 (VGIIAGLVLLGSVVSGAVVAAVMW) form a helical membrane-spanning segment. The Cytoplasmic segment spans residues 330–350 (RKKSSGGKGRSYSKAEWSDSA).

Belongs to the MHC class I family. Heterodimer of an alpha chain and a beta chain (beta-2-microglobulin).

The protein resides in the membrane. Functionally, preferably binds to a peptide derived from the signal sequence of most HLA-A, -B, -C and -G molecules. In Pan troglodytes (Chimpanzee), this protein is Patr class I histocompatibility antigen, alpha chain E (Patr-E).